Reading from the N-terminus, the 270-residue chain is tRNA pseudouridine synthase A (270 aa).

Catalysis depends on Asp60, which acts as the Nucleophile. Residues 107 to 111 (FHARF) form an RNA binding region. Tyr118 lines the substrate pocket. The segment at 168-172 (QCQSR) is interaction with tRNA.

Belongs to the tRNA pseudouridine synthase TruA family. As to quaternary structure, homodimer.

It carries out the reaction uridine(38/39/40) in tRNA = pseudouridine(38/39/40) in tRNA. In terms of biological role, formation of pseudouridine at positions 38, 39 and 40 in the anticodon stem and loop of transfer RNAs. This is tRNA pseudouridine synthase A from Shigella boydii serotype 4 (strain Sb227).